Consider the following 321-residue polypeptide: Thioredoxin reductase (321 aa).

FAD contacts are provided by residues Ser11–Ala14, Thr40–Ala41, Gln45, Asn54, Cys145, Asp288, and Arg295–Ala297. A disulfide bridge connects residues Cys142 and Cys145.

The protein belongs to the class-II pyridine nucleotide-disulfide oxidoreductase family. Homodimer. The cofactor is FAD.

It localises to the cytoplasm. The catalysed reaction is [thioredoxin]-dithiol + NADP(+) = [thioredoxin]-disulfide + NADPH + H(+). The sequence is that of Thioredoxin reductase (TRR1) from Debaryomyces hansenii (strain ATCC 36239 / CBS 767 / BCRC 21394 / JCM 1990 / NBRC 0083 / IGC 2968) (Yeast).